Here is a 309-residue protein sequence, read N- to C-terminus: Elongation factor Ts (309 aa).

An involved in Mg(2+) ion dislocation from EF-Tu region spans residues 82 to 85 (TDFV).

Belongs to the EF-Ts family.

The protein resides in the cytoplasm. Its function is as follows. Associates with the EF-Tu.GDP complex and induces the exchange of GDP to GTP. It remains bound to the aminoacyl-tRNA.EF-Tu.GTP complex up to the GTP hydrolysis stage on the ribosome. This chain is Elongation factor Ts, found in Rickettsia peacockii (strain Rustic).